The sequence spans 350 residues: Phenylalanine--tRNA ligase alpha subunit (350 aa).

Mg(2+) is bound at residue Glu271.

Belongs to the class-II aminoacyl-tRNA synthetase family. Phe-tRNA synthetase alpha subunit type 1 subfamily. As to quaternary structure, tetramer of two alpha and two beta subunits. Mg(2+) is required as a cofactor.

Its subcellular location is the cytoplasm. The enzyme catalyses tRNA(Phe) + L-phenylalanine + ATP = L-phenylalanyl-tRNA(Phe) + AMP + diphosphate + H(+). This Verminephrobacter eiseniae (strain EF01-2) protein is Phenylalanine--tRNA ligase alpha subunit.